The sequence spans 322 residues: Ferredoxin--NADP reductase (322 aa).

Positions 14, 33, 41, 46, 86, 120, 278, and 319 each coordinate FAD.

This sequence belongs to the ferredoxin--NADP reductase type 2 family. In terms of assembly, homodimer. It depends on FAD as a cofactor.

It carries out the reaction 2 reduced [2Fe-2S]-[ferredoxin] + NADP(+) + H(+) = 2 oxidized [2Fe-2S]-[ferredoxin] + NADPH. The polypeptide is Ferredoxin--NADP reductase (Salinispora arenicola (strain CNS-205)).